The sequence spans 104 residues: Small ribosomal subunit protein uS10 (104 aa).

Belongs to the universal ribosomal protein uS10 family. Part of the 30S ribosomal subunit.

Its function is as follows. Involved in the binding of tRNA to the ribosomes. This chain is Small ribosomal subunit protein uS10, found in Aquifex aeolicus (strain VF5).